The primary structure comprises 516 residues: Delta(24)-sterol reductase (516 aa).

A signal peptide spans 1–22 (MEPAVSLAVCALLFLLWVRVKG). The Lumenal segment spans residues 23 to 31 (LEFVLIHQR). The chain crosses the membrane as a helical span at residues 32-52 (WVFVCLFLLPLSLIFDIYYYV). Over 53 to 516 (RAWVVFKLSS…YDKICKAARH (464 aa)) the chain is Cytoplasmic. In terms of domain architecture, FAD-binding PCMH-type spans 58–234 (FKLSSAPRLH…VAAEIRIIPA (177 aa)). Position 163–175 (163–175 (TVGGLIMGTGIES)) interacts with FAD.

This sequence belongs to the FAD-binding oxidoreductase/transferase type 4 family. FAD is required as a cofactor.

The protein resides in the endoplasmic reticulum membrane. Its subcellular location is the golgi apparatus membrane. The enzyme catalyses 5alpha-cholest-8-en-3beta-ol + NADP(+) = zymosterol + NADPH + H(+). The catalysed reaction is cholesterol + NADP(+) = desmosterol + NADPH + H(+). It catalyses the reaction lanosterol + NADPH + H(+) = 24,25-dihydrolanosterol + NADP(+). It functions in the pathway steroid biosynthesis; cholesterol biosynthesis. In terms of biological role, catalyzes the reduction of the delta-24 double bond of sterol intermediates during cholesterol biosynthesis. In addition to its cholesterol-synthesizing activity, can protect cells from oxidative stress by reducing caspase 3 activity during apoptosis induced by oxidative stress. Also protects against amyloid-beta peptide-induced apoptosis. The sequence is that of Delta(24)-sterol reductase (Dhcr24) from Mus musculus (Mouse).